The sequence spans 325 residues: Probable siderophore-binding lipoprotein YfiY (325 aa).

The first 20 residues, 1-20 (MKKHISMLFVFLMAVMVLSA), serve as a signal peptide directing secretion. A lipid anchor (N-palmitoyl cysteine) is attached at Cys21. The S-diacylglycerol cysteine moiety is linked to residue Cys21. The Fe/B12 periplasmic-binding domain occupies 56–325 (RIVVLTNEGT…DIETYFLKTK (270 aa)). Ser290 bears the Phosphoserine mark. Thr302 is modified (phosphothreonine).

The protein belongs to the bacterial solute-binding protein 8 family. In terms of assembly, the complex is composed of one ATP-binding protein (YusV), two transmembrane proteins (YfiZ and YfhA) and a solute-binding protein (YfiY). Interacts with FloT.

Its subcellular location is the cell membrane. The protein localises to the cytoplasm. It is found in the membrane raft. In terms of biological role, part of the ABC transporter complex YfiYZ/YfhA/YusV involved in import of the iron-hydroxamate siderophores schizokinen, arthrobactin and corprogen. Binds the siderophores and delivers them to the surface of YfiZ/YfhA. The polypeptide is Probable siderophore-binding lipoprotein YfiY (yfiY) (Bacillus subtilis (strain 168)).